Consider the following 4574-residue polypeptide: E3 ubiquitin-protein ligase MYCBP2 (4574 aa).

Disordered stretches follow at residues 92–115 and 599–620; these read RGKK…VKTR and SASK…PYKP. 4 RCC1 repeats span residues 591 to 646, 690 to 746, 943 to 993, and 995 to 1051; these read DGSV…IVTK, SGEV…MMCQ, NGDV…VLLM, and GQVF…LRID. Basic residues predominate over residues 611 to 620; the sequence is SRRQPKPYKP. Cysteine 1733 and cysteine 1850 are oxidised to a cystine. 2 disordered regions span residues 1976-1998 and 2313-2332; these read APPT…EQGL and LQRL…LTFG. Composition is skewed to polar residues over residues 1981–1998 and 2317–2328; these read NPNQ…EQGL and PGTSSNSATGTD. One copy of the Filamin repeat lies at 2336 to 2417; it reads APKLEATYEP…IHVTIDGIEI (82 aa). Disordered stretches follow at residues 2613-2824, 2845-2922, 3085-3116, 3345-3365, and 3505-3526; these read GFDY…PSPH, SNDE…KQAM, SPGS…KAEV, PGSN…TDSD, and FETE…EQEK. 2 stretches are compositionally biased toward basic and acidic residues: residues 2639–2663 and 2678–2688; these read HRQE…KSKN and DTGKLRSDSHS. The segment covering 2716-2729 has biased composition (polar residues); sequence NPGSRSSSPKQKTF. Positions 2730 to 2745 are enriched in low complexity; that stretch reads TSGRSSPSSTSSPRSS. 3 stretches are compositionally biased toward basic and acidic residues: residues 2761-2772, 2854-2864, and 2874-2883; these read VHLDPPRERSKS, SELHNAEEGSS, and PVKEELESRS. Composition is skewed to basic residues over residues 2887 to 2900 and 3102 to 3111; these read VSRK…RPKK and KKTKKEKKKK. Residues 3515 to 3526 are compositionally biased toward basic and acidic residues; that stretch reads NKGNKENLEQEK. A DOC domain is found at 3617-3795; that stretch reads FNISVQSGYE…SVAQQKNCEA (179 aa). The disordered stretch occupies residues 3815 to 3841; it reads GDAEPTPEQEEKNLLSSPEGEDKAPSD. The Zn(2+) site is built by cysteine 4324, cysteine 4327, cysteine 4342, histidine 4344, histidine 4347, cysteine 4350, cysteine 4371, cysteine 4374, cysteine 4440, and cysteine 4443. The segment at 4324-4375 adopts an RING-type; atypical zinc-finger fold; that stretch reads CMICFTEALSAAPAIQLDCSHVFHLQCTRRVLENRWLGPRITFGFMSCPICK. The tract at residues 4435 to 4572 is tandem cysteine domain; it reads YAYYVCFKCK…LGCGVCRNAH (138 aa). Cysteine 4454 is an active-site residue. Residues cysteine 4471, cysteine 4474, cysteine 4483, histidine 4486, cysteine 4495, cysteine 4498, and cysteine 4499 each coordinate Zn(2+). Cysteine 4506 is a catalytic residue. 7 residues coordinate Zn(2+): cysteine 4513, cysteine 4516, cysteine 4534, cysteine 4548, histidine 4554, cysteine 4565, and cysteine 4568.

This sequence belongs to the RING-Cys relay (RCR) family. Widely expressed when the visual system begins developing. In the eye, expressed in all cells, including retinal ganglion cells, with no obvious gradient.

Its subcellular location is the nucleus. The protein localises to the cell projection. It is found in the axon. It localises to the cytoplasm. The protein resides in the cytoskeleton. The catalysed reaction is [E2 ubiquitin-conjugating enzyme]-S-ubiquitinyl-L-cysteine + [acceptor protein]-L-threonine = [E2 ubiquitin-conjugating enzyme]-L-cysteine + [acceptor protein]-3-O-ubiquitinyl-L-threonine.. Its pathway is protein modification; protein ubiquitination. Its function is as follows. Atypical E3 ubiquitin-protein ligase which specifically mediates ubiquitination of threonine and serine residues on target proteins, instead of ubiquitinating lysine residues. Shows esterification activity towards both threonine and serine, with a preference for threonine, and acts via two essential catalytic cysteine residues that relay ubiquitin to its substrate via thioester intermediates. Interacts with the E2 enzymes UBE2D1, UBE2D3, UBE2E1 and UBE2L3. Plays a key role in neural development, probably by mediating ubiquitination of threonine residues on target proteins. Involved in different processes such as regulation of neurite outgrowth, synaptic growth, synaptogenesis and axon degeneration. Required in the visual system for correct fasciculation, targeting and mapping of retinal axons. Acts as a regulator of pteridine synthesis. May play a role in the regulation of the circadian clock gene expression. The chain is E3 ubiquitin-protein ligase MYCBP2 from Danio rerio (Zebrafish).